The following is a 161-amino-acid chain: MFSNHADMMLTQIAIGLCFTLLYFVVFRTLILQFNMCTPGREDAEVKLYSKAEYKASRGQTTAAEPKKELDQAAGILQALGGVGNISSINNCATRLRIALHDMSQTLDDEVFKKLGAHGVFRSGDAIQVIIGLHVSQLREQLDSLINSHQSAENVAITEAV.

Residues Leu-10–Leu-32 form a helical membrane-spanning segment. Residues Leu-70–Ala-152 form the PTS EIIB type-1 domain. The Phosphocysteine intermediate role is filled by Cys-92.

It is found in the cell inner membrane. The phosphoenolpyruvate-dependent sugar phosphotransferase system (sugar PTS), a major carbohydrate active -transport system, catalyzes the phosphorylation of incoming sugar substrates concomitantly with their translocation across the cell membrane. This operon may be cryptic in wild-type K12 strains. The polypeptide is Phosphotransferase enzyme IIB component GlvB (Escherichia coli (strain K12)).